Here is a 428-residue protein sequence, read N- to C-terminus: 3-phosphoshikimate 1-carboxyvinyltransferase (428 aa).

Residues K22, S23, and R27 each contribute to the 3-phosphoshikimate site. Residue K22 coordinates phosphoenolpyruvate. Phosphoenolpyruvate-binding residues include G96 and R124. Residues S170, S171, Q172, S198, D314, N337, and K341 each contribute to the 3-phosphoshikimate site. Q172 is a binding site for phosphoenolpyruvate. D314 (proton acceptor) is an active-site residue. Phosphoenolpyruvate-binding residues include R345, R387, and K412.

Belongs to the EPSP synthase family. Monomer.

Its subcellular location is the cytoplasm. The catalysed reaction is 3-phosphoshikimate + phosphoenolpyruvate = 5-O-(1-carboxyvinyl)-3-phosphoshikimate + phosphate. The protein operates within metabolic intermediate biosynthesis; chorismate biosynthesis; chorismate from D-erythrose 4-phosphate and phosphoenolpyruvate: step 6/7. In terms of biological role, catalyzes the transfer of the enolpyruvyl moiety of phosphoenolpyruvate (PEP) to the 5-hydroxyl of shikimate-3-phosphate (S3P) to produce enolpyruvyl shikimate-3-phosphate and inorganic phosphate. This chain is 3-phosphoshikimate 1-carboxyvinyltransferase, found in Shewanella denitrificans (strain OS217 / ATCC BAA-1090 / DSM 15013).